Here is a 536-residue protein sequence, read N- to C-terminus: Keratin, type II cytoskeletal 4 (536 aa).

The interval 1 to 145 is head; the sequence is MISRQSSVRG…DPEIQKIRTA (145 aa). Arginine 13 carries the omega-N-methylarginine modification. A coil 1A region spans residues 146-181; that stretch reads EREQIKTLNNKFASFIDKVRFLEQQNKVLETKWNLL. The region spanning 146 to 457 is the IF rod domain; sequence EREQIKTLNN…KLLEGEECRM (312 aa). Positions 182-200 are linker 1; it reads QQQTTTTSPRNLDPFFETY. Residues 201-293 are coil 1B; it reads INALRKNLDT…LYEAELSQMQ (93 aa). The segment at 294-316 is linker 12; that stretch reads THVSDTSVVLSMDNNRNLDLDGI. The tract at residues 317–454 is coil 2; that stretch reads IAEVRAQYEE…TYRKLLEGEE (138 aa). The segment at 455–524 is tail; sequence CRMSGECKSA…TSSATITKRS (70 aa). Residues 515–536 are disordered; sequence TSSATITKRSPRTRQDPDGLQP. Over residues 527 to 536 the composition is skewed to basic and acidic residues; sequence TRQDPDGLQP.

This sequence belongs to the intermediate filament family. Heterotetramer of two type I and two type II keratins. keratin-4 is generally associated with keratin-13.

This is Keratin, type II cytoskeletal 4 from Rattus norvegicus (Rat).